The following is a 347-amino-acid chain: Ferrochelatase (347 aa).

Residues His193 and Glu273 each coordinate Fe cation.

Belongs to the ferrochelatase family.

The protein localises to the cytoplasm. It carries out the reaction heme b + 2 H(+) = protoporphyrin IX + Fe(2+). The protein operates within porphyrin-containing compound metabolism; protoheme biosynthesis; protoheme from protoporphyrin-IX: step 1/1. Functionally, catalyzes the ferrous insertion into protoporphyrin IX. The chain is Ferrochelatase from Rickettsia canadensis (strain McKiel).